The chain runs to 283 residues: GTPase Era (283 aa).

Positions 7–175 (YCGHVIIVGK…KNIIKSYLPE (169 aa)) constitute an Era-type G domain. The segment at 15–22 (GKANVGKS) is G1. 15–22 (GKANVGKS) contacts GTP. A G2 region spans residues 41-45 (NTTQS). Positions 62 to 65 (DTPG) are G3. Residues 62-66 (DTPGV) and 124-127 (NKID) each bind GTP. The tract at residues 124–127 (NKID) is G4. A G5 region spans residues 154-156 (ISA). One can recognise a KH type-2 domain in the interval 198–283 (IREQLILFLG…HLVLWVKDKN (86 aa)).

This sequence belongs to the TRAFAC class TrmE-Era-EngA-EngB-Septin-like GTPase superfamily. Era GTPase family. In terms of assembly, monomer.

Its subcellular location is the cytoplasm. It localises to the cell membrane. An essential GTPase that binds both GDP and GTP, with rapid nucleotide exchange. Plays a role in 16S rRNA processing and 30S ribosomal subunit biogenesis and possibly also in cell cycle regulation and energy metabolism. This chain is GTPase Era, found in Buchnera aphidicola subsp. Acyrthosiphon pisum (strain APS) (Acyrthosiphon pisum symbiotic bacterium).